Here is a 185-residue protein sequence, read N- to C-terminus: Threonylcarbamoyl-AMP synthase (185 aa).

Positions 7–185 (AAQRRAARAH…IDFASGRVLR (179 aa)) constitute a YrdC-like domain.

It belongs to the SUA5 family. TsaC subfamily.

Its subcellular location is the cytoplasm. The enzyme catalyses L-threonine + hydrogencarbonate + ATP = L-threonylcarbamoyladenylate + diphosphate + H2O. Functionally, required for the formation of a threonylcarbamoyl group on adenosine at position 37 (t(6)A37) in tRNAs that read codons beginning with adenine. Catalyzes the conversion of L-threonine, HCO(3)(-)/CO(2) and ATP to give threonylcarbamoyl-AMP (TC-AMP) as the acyladenylate intermediate, with the release of diphosphate. The protein is Threonylcarbamoyl-AMP synthase of Laribacter hongkongensis (strain HLHK9).